The sequence spans 65 residues: Gallinacin-12 (65 aa).

The first 19 residues, 1–19 (MRNLCFVFIFISLLAHGST), serve as a signal peptide directing secretion. 3 disulfide bridges follow: Cys25–Cys54, Cys32–Cys47, and Cys37–Cys55.

It belongs to the beta-defensin family. As to expression, expressed in the large intestine, kidney liver, gall bladder, testis, ovary and male and female reproductive tracts. Expressed in the ovarian stroma and the theca and granulosa layers of the ovarian follicle.

It localises to the secreted. Its subcellular location is the cytoplasmic granule. Functionally, has bactericidal activity. The sequence is that of Gallinacin-12 (GAL12) from Gallus gallus (Chicken).